A 254-amino-acid chain; its full sequence is Putative cysteine-rich repeat secretory protein 37 (254 aa).

The signal sequence occupies residues Met-1–Ser-29. Gnk2-homologous domains are found at residues Tyr-36 to Ser-138 and Tyr-145 to Phe-251.

It belongs to the cysteine-rich repeat secretory protein family.

The protein resides in the secreted. This is Putative cysteine-rich repeat secretory protein 37 (CRRSP37) from Arabidopsis thaliana (Mouse-ear cress).